Consider the following 451-residue polypeptide: Aspartate aminotransferase, mitochondrial (451 aa).

The L-aspartate site is built by Gly52, Trp155, and Asn216. At Lys286 the chain carries N6-(pyridoxal phosphate)lysine. Arg423 lines the L-aspartate pocket.

This sequence belongs to the class-I pyridoxal-phosphate-dependent aminotransferase family. As to quaternary structure, homodimer. Pyridoxal 5'-phosphate is required as a cofactor.

Its subcellular location is the mitochondrion matrix. The enzyme catalyses L-aspartate + 2-oxoglutarate = oxaloacetate + L-glutamate. Its function is as follows. Plays a key role in amino acid metabolism. Important for metabolite exchange between mitochondria and cytosol. In Saccharomyces cerevisiae (strain ATCC 204508 / S288c) (Baker's yeast), this protein is Aspartate aminotransferase, mitochondrial (AAT1).